The sequence spans 87 residues: U3-theraphotoxin-Hhn1a 16 (87 aa).

An N-terminal signal peptide occupies residues 1 to 24 (MVNMKASMFLTFAGLVLLFVVCYA). Residues 25–52 (SESEEKEFPKEMLSSIFAVDNDFKQGER) constitute a propeptide that is removed on maturation. 3 disulfides stabilise this stretch: C54/C67, C61/C72, and C66/C79.

Belongs to the neurotoxin 10 (Hwtx-1) family. 51 (Hntx-8) subfamily. Hntx-8 sub-subfamily. In terms of tissue distribution, expressed by the venom gland.

The protein resides in the secreted. Its function is as follows. Ion channel inhibitor. The protein is U3-theraphotoxin-Hhn1a 16 of Cyriopagopus hainanus (Chinese bird spider).